The chain runs to 358 residues: uncharacterized protein (358 aa).

The protein belongs to the methyltransferase superfamily.

This is an uncharacterized protein from Mycobacterium tuberculosis (strain CDC 1551 / Oshkosh).